The chain runs to 316 residues: MNDVSKASLPKAIFLMGPTASGKTALAIALRKVLPVELISVDSALIYRGMDIGTAKPNADELKAAPHRLLDIRDPSQAYSAADFRRDALAQMAEITAAGRIPLLVGGTMLYFKALLEGLSPLPSADPEVRSRIEQQAAELGWEALHQQLQEIDPVAAARIHPNDPQRLSRALEVFFISGKTLTELTQTSGDALPYQVHQFAIAPASRELLHQRIELRFHQMLASGFEAEVRALFARGDLHTDLPSIRCVGYRQMWSYIEGEISYDEMVYRGVCATRQLAKRQMTWLRGWEGVRWLDSENPDRARKEVLQVVGAIAD.

ATP is bound at residue 17–24 (GPTASGKT). 19–24 (TASGKT) lines the substrate pocket. Interaction with substrate tRNA stretches follow at residues 42-45 (DSAL), 166-170 (QRLSR), and 247-252 (RCVGYR).

It belongs to the IPP transferase family. As to quaternary structure, monomer. It depends on Mg(2+) as a cofactor.

It carries out the reaction adenosine(37) in tRNA + dimethylallyl diphosphate = N(6)-dimethylallyladenosine(37) in tRNA + diphosphate. In terms of biological role, catalyzes the transfer of a dimethylallyl group onto the adenine at position 37 in tRNAs that read codons beginning with uridine, leading to the formation of N6-(dimethylallyl)adenosine (i(6)A). The polypeptide is tRNA dimethylallyltransferase (Salmonella paratyphi C (strain RKS4594)).